The sequence spans 259 residues: Ribosomal RNA small subunit methyltransferase A (259 aa).

Asn12, Leu14, Gly39, Glu60, Asp84, and Asn102 together coordinate S-adenosyl-L-methionine.

The protein belongs to the class I-like SAM-binding methyltransferase superfamily. rRNA adenine N(6)-methyltransferase family. RsmA subfamily.

The protein localises to the cytoplasm. The enzyme catalyses adenosine(1518)/adenosine(1519) in 16S rRNA + 4 S-adenosyl-L-methionine = N(6)-dimethyladenosine(1518)/N(6)-dimethyladenosine(1519) in 16S rRNA + 4 S-adenosyl-L-homocysteine + 4 H(+). In terms of biological role, specifically dimethylates two adjacent adenosines (A1518 and A1519) in the loop of a conserved hairpin near the 3'-end of 16S rRNA in the 30S particle. May play a critical role in biogenesis of 30S subunits. In Nitrosospira multiformis (strain ATCC 25196 / NCIMB 11849 / C 71), this protein is Ribosomal RNA small subunit methyltransferase A.